The sequence spans 863 residues: Dipeptidyl peptidase 9 (863 aa).

Residues 1–20 (MATTGTPTADRGDAAATDDP) are disordered. N-acetylalanine is present on Ala-2. Residues Ser-730, Asp-808, and His-840 each act as charge relay system in the active site. Residue Ser-730 participates in Val-boroPro binding.

This sequence belongs to the peptidase S9B family. DPPIV subfamily. Homodimer. Forms a ternary complex with NLRP1, composed of a DPP9 homodimer, one full-length NLRP1 protein, and one cleaved C-terminus of NLRP1 (NACHT, LRR and PYD domains-containing protein 1, C-terminus). Forms a ternary complex with CARD8, composed of a DPP9 homodimer, one full-length NLRP1 protein, and one cleaved C-terminus of CARD8 (Caspase recruitment domain-containing protein 8, C-terminus). In the ternary complex, only one subunit of the DPP9 homodimer is bound to NLRP1 or CARD8. As to expression, ubiquitously expressed, with highest levels in liver, heart and muscle, and lowest levels in brain.

It localises to the cytoplasm. The protein localises to the cytosol. The protein resides in the nucleus. The catalysed reaction is Release of an N-terminal dipeptide, Xaa-Yaa-|-Zaa-, from a polypeptide, preferentially when Yaa is Pro, provided Zaa is neither Pro nor hydroxyproline.. Its activity is regulated as follows. Inhibited by the serine proteinase inhibitor 4-(2-aminoethyl)benzenesulphonyl fluoride (AEBSF), and by di-isopropylfluorophosphate. Inhibited by Val-boroPro (Talabostat, PT-100), a non-selective inhibitor, which triggers pyroptosis in monocytes and macrophages. Val-boroPro inhibits activity by binding to the active site, mimicking a substrate-bound state, thereby displacing the C-terminal fragment of NLRP1, leading to activation of the NLRP1 inflammasome. In contrast, Val-boroPro does not directly displaces CARD8: it acts by promoting degradation of the N-terminal part of CARD8, leading to indirect disruption of the ternary complex. Chemical inhibition of DPP9 by Val-boroPro in HIV-1-infected cells activates the CARD8 inflammasome, triggering cell death, offering a promising strategy for the elimination of HIV-1 reservoirs in people living with HIV-1. In terms of biological role, dipeptidyl peptidase that cleaves off N-terminal dipeptides from proteins having a Pro or Ala residue at position 2. Acts as a key inhibitor of caspase-1-dependent monocyte and macrophage pyroptosis in resting cells by preventing activation of NLRP1 and CARD8. Sequesters the cleaved C-terminal part of NLRP1 and CARD8, which respectively constitute the active part of the NLRP1 and CARD8 inflammasomes, in a ternary complex, thereby preventing their oligomerization and activation. The dipeptidyl peptidase activity is required to suppress NLRP1 and CARD8; however, neither NLRP1 nor CARD8 are bona fide substrates of DPP9, suggesting the existence of substrate(s) required for NLRP1 and CARD8 inhibition. This is Dipeptidyl peptidase 9 from Homo sapiens (Human).